The chain runs to 304 residues: N-acetylmuramic acid 6-phosphate etherase (304 aa).

One can recognise an SIS domain in the interval 58–221 (IAERIHRGGR…STGVMIKLGK (164 aa)). The Proton donor role is filled by E86. E117 is a catalytic residue.

This sequence belongs to the GCKR-like family. MurNAc-6-P etherase subfamily. Homodimer.

It carries out the reaction N-acetyl-D-muramate 6-phosphate + H2O = N-acetyl-D-glucosamine 6-phosphate + (R)-lactate. The protein operates within amino-sugar metabolism; N-acetylmuramate degradation. Its function is as follows. Specifically catalyzes the cleavage of the D-lactyl ether substituent of MurNAc 6-phosphate, producing GlcNAc 6-phosphate and D-lactate. The polypeptide is N-acetylmuramic acid 6-phosphate etherase (Clostridium beijerinckii (strain ATCC 51743 / NCIMB 8052) (Clostridium acetobutylicum)).